The chain runs to 619 residues: Zinc finger protein 131 (619 aa).

The 65-residue stretch at 34 to 98 folds into the BTB domain; that stretch reads TDITLIVDGH…TYTAKLMIQG (65 aa). Residues 137–148 carry the Nuclear localization signal 1 motif; the sequence is TGKNEAKKRKIA. Ser231 is modified (phosphoserine). C2H2-type zinc fingers lie at residues 261-283, 288-311, and 328-350; these read FHCE…MKSH, FKCE…NCYH, and HICQ…LRKH. Glycyl lysine isopeptide (Lys-Gly) (interchain with G-Cter in SUMO2) cross-links involve residues Lys289 and Lys295. The Nuclear localization signal 2 signature appears at 317-328; the sequence is VSKKQRTGKKIH. A C2H2-type 4; degenerate zinc finger spans residues 356 to 381; it reads FECSNCHERFARNSTLKCHLTACQTG. 2 C2H2-type zinc fingers span residues 392–414 and 420–443; these read YECQ…LVIH and NHCT…SDAH. Basic and acidic residues-rich tracts occupy residues 574 to 587 and 595 to 612; these read QEER…AAME and LETK…ENDR. The interval 574 to 619 is disordered; that stretch reads QEEREPNHADAAMEEHEDAEGLETKPSEYSQARKTENDRTSLPVLE. Lys598 participates in a covalent cross-link: Glycyl lysine isopeptide (Lys-Gly) (interchain with G-Cter in SUMO).

The protein belongs to the krueppel C2H2-type zinc-finger protein family. Post-translationally, monosumoylated at Lys-598 by CBX4 and UHRF2. Sumoylation may potentiate ZNF131 inhibition of estrogen signaling. Sumoylation does not interfere with ubiquitination. In terms of processing, ubiquitinated. Ubiquitously expressed. Predominant expression is found in the developing central nervous system with strongest signals in the forebrain, midbrain, and hindbrain areas and in the neural tube.

It localises to the nucleus. Functionally, may be involved in transcriptional regulation as a repressor of ESR1/ER-alpha signaling. Plays a role during development and organogenesis as well as in the function of the adult central nervous system. This chain is Zinc finger protein 131 (Znf131), found in Mus musculus (Mouse).